The sequence spans 525 residues: tRNA-splicing endonuclease subunit Sen54 (525 aa).

Methionine 1 carries the N-acetylmethionine modification. A disordered region spans residues 1 to 46; that stretch reads MEPEPEPGSVEVPAGRVLSASELRAARSRSQKLPQRSHGPKDFLPD. The span at 7–23 shows a compositional bias: low complexity; that stretch reads PGSVEVPAGRVLSASEL. Serine 178 is modified (phosphoserine). Tyrosine 180 is subject to Phosphotyrosine. Residues 220–232 show a composition bias toward low complexity; the sequence is LPPVSLAASSSPA. Residues 220–273 are disordered; it reads LPPVSLAASSSPACDQSSQYPEEKSQDSSPRQGSELPLQFLGSSEPCSDLARED.

The protein belongs to the SEN54 family. In terms of assembly, tRNA splicing endonuclease is a heterotetramer composed of TSEN2, TSEN15, TSEN34/LENG5 and TSEN54. tRNA splicing endonuclease complex also contains proteins of the pre-mRNA 3'-end processing machinery such as CLP1, CPSF1, CPSF4 and CSTF2.

Its subcellular location is the nucleus. It is found in the nucleolus. Non-catalytic subunit of the tRNA-splicing endonuclease complex, a complex responsible for identification and cleavage of the splice sites in pre-tRNA. It cleaves pre-tRNA at the 5' and 3' splice sites to release the intron. The products are an intron and two tRNA half-molecules bearing 2',3' cyclic phosphate and 5'-OH termini. There are no conserved sequences at the splice sites, but the intron is invariably located at the same site in the gene, placing the splice sites an invariant distance from the constant structural features of the tRNA body. The tRNA splicing endonuclease is also involved in mRNA processing via its association with pre-mRNA 3'-end processing factors, establishing a link between pre-tRNA splicing and pre-mRNA 3'-end formation, suggesting that the endonuclease subunits function in multiple RNA-processing events. This Mus musculus (Mouse) protein is tRNA-splicing endonuclease subunit Sen54 (Tsen54).